We begin with the raw amino-acid sequence, 193 residues long: MLRLGIDIDGTITAQDTFVPYLNRSFNLSISLNDMTDYDLTKLLNITQEEFWDWMNQNEAIIYKEALLAQHAKQSLDLLKEEHKLIYITARRTHLTDITYEWFDRQNIHYDHIELVGGHHKVEAVKNHNIDLFFEDHHGNAMMIAKEAGIPVILFNSPYNQLPIDSNIIRVNNWLEAVQWMNNNKHHLIRVNN.

It belongs to the 5'(3')-deoxyribonucleotidase family.

The polypeptide is Putative nucleotidase YqfW (yqfW) (Bacillus subtilis (strain 168)).